Here is a 99-residue protein sequence, read N- to C-terminus: Large ribosomal subunit protein uL23 (99 aa).

The protein belongs to the universal ribosomal protein uL23 family. Part of the 50S ribosomal subunit. Contacts protein L29, and trigger factor when it is bound to the ribosome.

One of the early assembly proteins it binds 23S rRNA. One of the proteins that surrounds the polypeptide exit tunnel on the outside of the ribosome. Forms the main docking site for trigger factor binding to the ribosome. This is Large ribosomal subunit protein uL23 from Synechococcus sp. (strain JA-2-3B'a(2-13)) (Cyanobacteria bacterium Yellowstone B-Prime).